The chain runs to 345 residues: Uroporphyrinogen decarboxylase (345 aa).

Substrate contacts are provided by residues 27–31 (RQAGR), Phe-46, Asp-76, Tyr-152, Ser-207, and His-321.

The protein belongs to the uroporphyrinogen decarboxylase family. As to quaternary structure, homodimer.

The protein resides in the cytoplasm. The catalysed reaction is uroporphyrinogen III + 4 H(+) = coproporphyrinogen III + 4 CO2. It functions in the pathway porphyrin-containing compound metabolism; protoporphyrin-IX biosynthesis; coproporphyrinogen-III from 5-aminolevulinate: step 4/4. In terms of biological role, catalyzes the decarboxylation of four acetate groups of uroporphyrinogen-III to yield coproporphyrinogen-III. The polypeptide is Uroporphyrinogen decarboxylase (Staphylococcus aureus (strain MRSA252)).